A 278-amino-acid chain; its full sequence is Probable endonuclease 4 (278 aa).

9 residues coordinate Zn(2+): histidine 69, histidine 109, glutamate 145, aspartate 179, histidine 182, histidine 214, aspartate 227, histidine 229, and glutamate 259.

The protein belongs to the AP endonuclease 2 family. The cofactor is Zn(2+).

The catalysed reaction is Endonucleolytic cleavage to 5'-phosphooligonucleotide end-products.. In terms of biological role, endonuclease IV plays a role in DNA repair. It cleaves phosphodiester bonds at apurinic or apyrimidinic (AP) sites, generating a 3'-hydroxyl group and a 5'-terminal sugar phosphate. The protein is Probable endonuclease 4 of Phocaeicola vulgatus (strain ATCC 8482 / DSM 1447 / JCM 5826 / CCUG 4940 / NBRC 14291 / NCTC 11154) (Bacteroides vulgatus).